Reading from the N-terminus, the 295-residue chain is Very long chain fatty acid elongase 5 (295 aa).

7 consecutive transmembrane segments (helical) span residues 26–46, 64–84, 112–132, 150–170, 172–192, 207–223, and 227–247; these read WLLL…LFIV, ILVV…YELV, VLWW…FFIL, MLNI…FFGA, LNSF…IPAI, LTQF…AMIW, and FPMG…ILFT. Positions 265 to 295 are disordered; the sequence is YQNGSASAVNGYTNSFSSLEDNVKQRKQRQN. Polar residues predominate over residues 266 to 284; the sequence is QNGSASAVNGYTNSFSSLE.

It belongs to the ELO family. ELOVL5 subfamily.

The protein resides in the endoplasmic reticulum membrane. The protein localises to the cell projection. It is found in the dendrite. The catalysed reaction is a very-long-chain acyl-CoA + malonyl-CoA + H(+) = a very-long-chain 3-oxoacyl-CoA + CO2 + CoA. It carries out the reaction (6Z,9Z,12Z)-octadecatrienoyl-CoA + malonyl-CoA + H(+) = (8Z,11Z,14Z)-3-oxoeicosatrienoyl-CoA + CO2 + CoA. The enzyme catalyses (9Z,12Z,15Z)-octadecatrienoyl-CoA + malonyl-CoA + H(+) = (11Z,14Z,17Z)-3-oxoeicosatrienoyl-CoA + CO2 + CoA. It catalyses the reaction (9Z)-hexadecenoyl-CoA + malonyl-CoA + H(+) = 3-oxo-(11Z)-octadecenoyl-CoA + CO2 + CoA. The catalysed reaction is (9Z)-octadecenoyl-CoA + malonyl-CoA + H(+) = 3-oxo-(11Z)-eicosenoyl-CoA + CO2 + CoA. It carries out the reaction (11Z)-octadecenoyl-CoA + malonyl-CoA + H(+) = 3-oxo-(13Z)-eicosenoyl-CoA + CO2 + CoA. The enzyme catalyses (9Z,12Z)-octadecadienoyl-CoA + malonyl-CoA + H(+) = (11Z,14Z)-3-oxoicosa-11,14-dienoyl-CoA + CO2 + CoA. It catalyses the reaction (6Z,9Z,12Z,15Z)-octadecatetraenoyl-CoA + malonyl-CoA + H(+) = (8Z,11Z,14Z,17Z)-3-oxoicosatetraenoyl-CoA + CO2 + CoA. The catalysed reaction is (5Z,8Z,11Z,14Z)-eicosatetraenoyl-CoA + malonyl-CoA + H(+) = (7Z,10Z,13Z,16Z)-3-oxodocosatetraenoyl-CoA + CO2 + CoA. It carries out the reaction (5Z,8Z,11Z,14Z,17Z)-eicosapentaenoyl-CoA + malonyl-CoA + H(+) = 3-oxo-(7Z,10Z,13Z,16Z,19Z)-docosapentaenoyl-CoA + CO2 + CoA. It functions in the pathway lipid metabolism; polyunsaturated fatty acid biosynthesis. Its function is as follows. Catalyzes the first and rate-limiting reaction of the four reactions that constitute the long-chain fatty acids elongation cycle. This endoplasmic reticulum-bound enzymatic process allows the addition of 2 carbons to the chain of long- and very long-chain fatty acids (VLCFAs) per cycle. Condensing enzyme that acts specifically toward polyunsaturated acyl-CoA with the higher activity toward C18:3(n-6) acyl-CoA. May participate in the production of monounsaturated and of polyunsaturated VLCFAs of different chain lengths that are involved in multiple biological processes as precursors of membrane lipids and lipid mediators. In conditions where the essential linoleic and alpha linoleic fatty acids are lacking it is also involved in the synthesis of Mead acid from oleic acid. The sequence is that of Very long chain fatty acid elongase 5 from Xenopus laevis (African clawed frog).